A 331-amino-acid polypeptide reads, in one-letter code: Germ cell-specific gene 1-like protein (331 aa).

Over 1 to 8 the chain is Cytoplasmic; that stretch reads MKTSRRGR. The helical transmembrane segment at 9–29 threads the bilayer; the sequence is ALLAVALNLLALLFATTAFLT. The Extracellular segment spans residues 30 to 132; the sequence is THWCQGTQRV…FIDLAPASEK (103 aa). A helical transmembrane segment spans residues 133 to 153; that stretch reads GVLWLSVVSEVLYILLLVVGF. Residues 154–173 are Cytoplasmic-facing; the sequence is SLMCLELFHSSNVIDGLKLN. The chain crosses the membrane as a helical span at residues 174-194; the sequence is AFAAVFTVLSGLLGMVAHMMY. Over 195–217 the chain is Extracellular; the sequence is TQVFQVTVSLGPEDWRPHSWDYG. The helical transmembrane segment at 218–238 threads the bilayer; sequence WSFCLAWGSFTCCMAASVTTL. Residues 239-331 are Cytoplasmic-facing; that stretch reads NSYTKTVIEF…RQCWVLGHWV (93 aa).

It belongs to the GSG1 family. In terms of assembly, component of the inner core of AMPAR complex. AMPAR complex consists of an inner core made of 4 pore-forming GluA/GRIA proteins (GRIA1, GRIA2, GRIA3 and GRIA4) and 4 major auxiliary subunits arranged in a twofold symmetry. One of the two pairs of distinct binding sites is occupied either by CNIH2, CNIH3 or CACNG2, CACNG3. The other harbors CACNG2, CACNG3, CACNG4, CACNG8 or GSG1L. This inner core of AMPAR complex is complemented by outer core constituents binding directly to the GluA/GRIA proteins at sites distinct from the interaction sites of the inner core constituents. Outer core constituents include at least PRRT1, PRRT2, CKAMP44/SHISA9, FRRS1L and NRN1. The proteins of the inner and outer core serve as a platform for other, more peripherally associated AMPAR constituents. Alone or in combination, these auxiliary subunits control the gating and pharmacology of the AMPAR complex and profoundly impact their biogenesis and protein processing.

It is found in the cell membrane. The protein localises to the synapse. In terms of biological role, as a component of the inner core of AMPAR complex, modifies AMPA receptor (AMPAR) gating. This chain is Germ cell-specific gene 1-like protein (GSG1L), found in Homo sapiens (Human).